We begin with the raw amino-acid sequence, 121 residues long: Basic phospholipase A2 homolog GodMT-II (121 aa).

7 disulfide bridges follow: C26/C115, C28/C44, C43/C95, C49/C121, C50/C88, C57/C81, and C75/C86. Positions 105-117 (KNYKIYPKPLCKK) are important for membrane-damaging activities in eukaryotes and bacteria; heparin-binding.

The protein belongs to the phospholipase A2 family. Group II subfamily. K49 sub-subfamily. In terms of assembly, monomer. As to expression, expressed by the venom gland.

Its subcellular location is the secreted. Functionally, snake venom phospholipase A2 homolog that lacks enzymatic activity but shows high myotoxic activities. In vivo, induces a mild edema when subcutaneously injected into mice foot pad. The polypeptide is Basic phospholipase A2 homolog GodMT-II (Cerrophidion godmani (Porthidium godmani)).